A 65-amino-acid chain; its full sequence is Alpha-conotoxin BnIA (65 aa).

A signal peptide spans 1 to 21 (MGMRMMFTMFLLVVLATTVVS). The propeptide occupies 22–48 (FASDRASDGRNAAAKDKASDLVALTVK). 2 disulfides stabilise this stretch: cysteine 50–cysteine 56 and cysteine 51–cysteine 64. Residues 52–54 (SHP) are ser-Xaa-Pro motif, crucial for potent interaction with nAChR. Cysteine 64 carries the post-translational modification Cysteine amide.

This sequence belongs to the conotoxin A superfamily. As to expression, expressed by the venom duct.

It localises to the secreted. Its function is as follows. Alpha-conotoxins act on postsynaptic membranes, they bind to the nicotinic acetylcholine receptors (nAChR) and thus inhibit them. This toxin inhibits acetylcholine-evoked currents reversibly in oocytes expressing the human alpha-7/CHRNA7 nAChR, and blocks nerve-evoked skeletal muscle contractions in isolated mouse neuromuscular preparations, but with a very low affinity. This chain is Alpha-conotoxin BnIA, found in Conus bandanus (Banded marble cone).